Reading from the N-terminus, the 264-residue chain is Thymidylate synthase (264 aa).

Arg-21 is a dUMP binding site. His-51 serves as a coordination point for (6R)-5,10-methylene-5,6,7,8-tetrahydrofolate. DUMP is bound at residue 126-127 (RR). The active-site Nucleophile is Cys-146. DUMP contacts are provided by residues 166-169 (RSAD), Asn-177, and 207-209 (HLY). Asp-169 lines the (6R)-5,10-methylene-5,6,7,8-tetrahydrofolate pocket. Ala-263 is a (6R)-5,10-methylene-5,6,7,8-tetrahydrofolate binding site.

The protein belongs to the thymidylate synthase family. Bacterial-type ThyA subfamily. As to quaternary structure, homodimer.

Its subcellular location is the cytoplasm. It catalyses the reaction dUMP + (6R)-5,10-methylene-5,6,7,8-tetrahydrofolate = 7,8-dihydrofolate + dTMP. Its pathway is pyrimidine metabolism; dTTP biosynthesis. In terms of biological role, catalyzes the reductive methylation of 2'-deoxyuridine-5'-monophosphate (dUMP) to 2'-deoxythymidine-5'-monophosphate (dTMP) while utilizing 5,10-methylenetetrahydrofolate (mTHF) as the methyl donor and reductant in the reaction, yielding dihydrofolate (DHF) as a by-product. This enzymatic reaction provides an intracellular de novo source of dTMP, an essential precursor for DNA biosynthesis. In Azoarcus sp. (strain BH72), this protein is Thymidylate synthase.